Here is a 392-residue protein sequence, read N- to C-terminus: Elongation factor Tu (392 aa).

Residues 10–202 enclose the tr-type G domain; that stretch reads KVHVNVGTIG…VLDEYIEDPI (193 aa). A G1 region spans residues 19 to 26; sequence GHVDHGKT. 19–26 contributes to the GTP binding site; that stretch reads GHVDHGKT. Thr-26 is a Mg(2+) binding site. Residues 60–64 are G2; sequence GITIN. The interval 81-84 is G3; it reads DCPG. GTP contacts are provided by residues 81 to 85 and 136 to 139; these read DCPGH and NKCD. The interval 136-139 is G4; that stretch reads NKCD. A G5 region spans residues 174-176; that stretch reads SAL.

Belongs to the TRAFAC class translation factor GTPase superfamily. Classic translation factor GTPase family. EF-Tu/EF-1A subfamily. As to quaternary structure, monomer.

The protein localises to the cytoplasm. It carries out the reaction GTP + H2O = GDP + phosphate + H(+). Functionally, GTP hydrolase that promotes the GTP-dependent binding of aminoacyl-tRNA to the A-site of ribosomes during protein biosynthesis. The sequence is that of Elongation factor Tu from Apple proliferation phytoplasma.